A 295-amino-acid chain; its full sequence is MLYQQIAKNKRKTVLVMAGFVFLAGLIGAAIGYAFMGSAQTGIIIAVVVGIVYMFVILGQSTDVVMSMNNAQEITEQQAPELWHIVEDMAMVGKVPMPRVFIIDDPSPNAFATGPDPEHAAVAATTGILQRLNREELEGVMAHEVSHIRNYDIRLQTYALALASVISFLANMGMNAMWWGGGRRDDRDNGNAGQVIMLLLSVLAIILGPLAASMAQMALSRNREYLADASAVELTRNPQGLINALRKISMSEPMQNADPSSASMYIANPFKDGSWTHLFDTHPPIEKRIDRLEHM.

A run of 2 helical transmembrane segments spans residues 15 to 35 (LVMAGFVFLAGLIGAAIGYAF) and 39 to 59 (AQTGIIIAVVVGIVYMFVILG). Histidine 143 lines the Zn(2+) pocket. The active site involves glutamate 144. Position 147 (histidine 147) interacts with Zn(2+). The next 2 membrane-spanning stretches (helical) occupy residues 159-179 (ALALASVISFLANMGMNAMWW) and 195-215 (VIMLLLSVLAIILGPLAASMA). Glutamate 224 provides a ligand contact to Zn(2+).

The protein belongs to the peptidase M48B family. Zn(2+) is required as a cofactor.

The protein localises to the cell membrane. The polypeptide is Protease HtpX homolog (Ligilactobacillus salivarius (strain UCC118) (Lactobacillus salivarius)).